Reading from the N-terminus, the 513-residue chain is Dentin matrix acidic phosphoprotein 1 (513 aa).

A signal peptide spans 1 to 16 (MKISILLMFLWGLSCA). The disordered stretch occupies residues 23–513 (QNNESEDSEE…QDDNDCQDGY (491 aa)). Asparagine 25 carries an N-linked (GlcNAc...) asparagine glycan. The segment covering 46-60 (ESSESSEGSKVSSEE) has biased composition (low complexity). Residues 101–119 (DKDDDEDDSGDDTFGDDDS) show a composition bias toward acidic residues. Over residues 143–162 (TIQASEESAPQGQDSAQDTT) the composition is skewed to polar residues. Residues 163–180 (SESRELDNEDRVDSKPEG) are compositionally biased toward basic and acidic residues. Over residues 208 to 220 (SELDDEGMQSDDP) the composition is skewed to acidic residues. Polar residues predominate over residues 245-257 (NSEQANTQDSGGS). The span at 275-287 (EEDDRSELDDNNT) shows a compositional bias: acidic residues. The N-linked (GlcNAc...) asparagine glycan is linked to asparagine 285. The segment covering 296–307 (TENSNSRDTGLS) has biased composition (polar residues). The segment covering 309–325 (PRRDSKGDSQEDSKENL) has biased composition (basic and acidic residues). 3 N-linked (GlcNAc...) asparagine glycosylation sites follow: asparagine 324, asparagine 345, and asparagine 351. Low complexity predominate over residues 337–354 (SSESSQEANLSSQENSSE). Residues 364–366 (RGD) carry the Cell attachment site motif. The span at 376-386 (EDQEDSDSSEE) shows a compositional bias: acidic residues. Asparagine 413 and asparagine 426 each carry an N-linked (GlcNAc...) asparagine glycan. Residues 417-426 (ESPESPEDEN) show a composition bias toward acidic residues. Residues 427 to 442 (SSSQEGLQSHSSSAES) are compositionally biased toward low complexity. N-linked (GlcNAc...) asparagine glycosylation is present at asparagine 467. The span at 484-502 (IEIESRKLTVDAYHNKPIG) shows a compositional bias: basic and acidic residues. Over residues 503-513 (DQDDNDCQDGY) the composition is skewed to acidic residues.

As to quaternary structure, interacts with importin alpha. Post-translationally, phosphorylated in the cytosol and extracellular matrix and unphosphorylated in the nucleus. Phosphorylation is necessary for nucleocytoplasmic transport and may be catalyzed by a nuclear isoform of CK2 and can be augmented by calcium. Phosphorylated (in vitro) by FAM20C in the extracellular medium at sites within the S-x-E/pS motif. As to expression, expressed in tooth particularly in odontoblast, ameloblast and cementoblast.

It localises to the nucleus. The protein localises to the cytoplasm. Its subcellular location is the secreted. It is found in the extracellular space. The protein resides in the extracellular matrix. In terms of biological role, may have a dual function during osteoblast differentiation. In the nucleus of undifferentiated osteoblasts, unphosphorylated form acts as a transcriptional component for activation of osteoblast-specific genes like osteocalcin. During the osteoblast to osteocyte transition phase it is phosphorylated and exported into the extracellular matrix, where it regulates nucleation of hydroxyapatite. This Homo sapiens (Human) protein is Dentin matrix acidic phosphoprotein 1 (DMP1).